The primary structure comprises 333 residues: Meiotic drive suppressor wtf9 (333 aa).

The segment at 1–69 (MKNNYTSLKS…ENHSSGTTDN (69 aa)) is disordered. Residues 19–30 (KTDHEIDLEKGP) show a composition bias toward basic and acidic residues. 4 helical membrane-spanning segments follow: residues 73-95 (LLIK…VCYL), 108-130 (VEWT…LTYF), 174-191 (WVVI…TLFL), and 204-226 (LICS…RLPF).

It belongs to the WTF family. Homomer. Interacts with other proteins that exhibit high sequence similarity.

Its subcellular location is the spore membrane. The protein localises to the vacuole membrane. Acts as a suppressor component of the dual wtf meiotic drive system, and can suppress but not confer meiotic drive by compatible poisons. Wtf meiotic drive systems promote unequal transmission of alleles from the parental zygote to progeny spores by encoding a poison and an antidote from the same locus; the poison is trans-acting and forms toxic aggregates in all spores within an ascus, wherease the antidote is spore-specific and targets aggregates for degradation by the vacuole. Meiotic drive by wtf systems therefore lead to poisoning of all progeny that do not inherit the dual poison/antidote allele, or express a compatible antidote. The chain is Meiotic drive suppressor wtf9 from Schizosaccharomyces pombe (strain 972 / ATCC 24843) (Fission yeast).